A 346-amino-acid polypeptide reads, in one-letter code: Phosphoribosylformylglycinamidine cyclo-ligase (346 aa).

Belongs to the AIR synthase family.

Its subcellular location is the cytoplasm. The enzyme catalyses 2-formamido-N(1)-(5-O-phospho-beta-D-ribosyl)acetamidine + ATP = 5-amino-1-(5-phospho-beta-D-ribosyl)imidazole + ADP + phosphate + H(+). The protein operates within purine metabolism; IMP biosynthesis via de novo pathway; 5-amino-1-(5-phospho-D-ribosyl)imidazole from N(2)-formyl-N(1)-(5-phospho-D-ribosyl)glycinamide: step 2/2. This is Phosphoribosylformylglycinamidine cyclo-ligase from Erwinia tasmaniensis (strain DSM 17950 / CFBP 7177 / CIP 109463 / NCPPB 4357 / Et1/99).